An 89-amino-acid polypeptide reads, in one-letter code: Small ribosomal subunit protein uS15 (89 aa).

It belongs to the universal ribosomal protein uS15 family. As to quaternary structure, part of the 30S ribosomal subunit. Forms a bridge to the 50S subunit in the 70S ribosome, contacting the 23S rRNA.

One of the primary rRNA binding proteins, it binds directly to 16S rRNA where it helps nucleate assembly of the platform of the 30S subunit by binding and bridging several RNA helices of the 16S rRNA. In terms of biological role, forms an intersubunit bridge (bridge B4) with the 23S rRNA of the 50S subunit in the ribosome. This Chlorobium phaeobacteroides (strain DSM 266 / SMG 266 / 2430) protein is Small ribosomal subunit protein uS15.